Reading from the N-terminus, the 101-residue chain is NAD(P)H-quinone oxidoreductase subunit 4L, chloroplastic (101 aa).

Transmembrane regions (helical) follow at residues 2 to 22, 32 to 52, and 61 to 81; these read MLEH…YGLI, MCLE…SDFF, and IFSI…SAIV.

It belongs to the complex I subunit 4L family. NDH is composed of at least 16 different subunits, 5 of which are encoded in the nucleus.

The protein resides in the plastid. It is found in the chloroplast thylakoid membrane. It catalyses the reaction a plastoquinone + NADH + (n+1) H(+)(in) = a plastoquinol + NAD(+) + n H(+)(out). The catalysed reaction is a plastoquinone + NADPH + (n+1) H(+)(in) = a plastoquinol + NADP(+) + n H(+)(out). NDH shuttles electrons from NAD(P)H:plastoquinone, via FMN and iron-sulfur (Fe-S) centers, to quinones in the photosynthetic chain and possibly in a chloroplast respiratory chain. The immediate electron acceptor for the enzyme in this species is believed to be plastoquinone. Couples the redox reaction to proton translocation, and thus conserves the redox energy in a proton gradient. The polypeptide is NAD(P)H-quinone oxidoreductase subunit 4L, chloroplastic (Citrus sinensis (Sweet orange)).